The sequence spans 145 residues: Large ribosomal subunit protein uL15 (145 aa).

Residues 1–57 are disordered; sequence MKLNDLSPAPGSRREKHRPGRGIGSGLGKTGGRGHKGQTSRSGGTIAPGFEGGQQPL. The segment covering 21–31 has biased composition (gly residues); sequence RGIGSGLGKTG.

Belongs to the universal ribosomal protein uL15 family. Part of the 50S ribosomal subunit.

Its function is as follows. Binds to the 23S rRNA. This is Large ribosomal subunit protein uL15 from Pseudomonas fluorescens (strain SBW25).